We begin with the raw amino-acid sequence, 228 residues long: Max-interacting protein 1 (228 aa).

Disordered regions lie at residues 29 to 76 (GYAS…NELE) and 161 to 228 (IGST…SFTS). Positions 43–56 (QHSKPPRRLSRAQK) are enriched in basic residues. The segment covering 57 to 70 (HSSGSSNTSTANRS) has biased composition (polar residues). In terms of domain architecture, bHLH spans 67–119 (ANRSTHNELEKNRRAHLRLCLERLKVLIPLGPDCTRHTTLGLLNKAKAHIKKL). Positions 173–183 (EREEIEVDVES) are enriched in acidic residues. Residues 216 to 228 (GYSSASVKLSFTS) are compositionally biased toward polar residues.

As to quaternary structure, interacts with SMC3. Efficient DNA binding requires dimerization with another bHLH protein. Binds DNA as a heterodimer with MAX. Interacts with RNF17. In terms of tissue distribution, high levels found in the brain, heart and lung while lower levels are seen in the liver, kidney and skeletal muscle.

The protein localises to the nucleus. Functionally, transcriptional repressor. MXI1 binds with MAX to form a sequence-specific DNA-binding protein complex which recognizes the core sequence 5'-CAC[GA]TG-3'. MXI1 thus antagonizes MYC transcriptional activity by competing for MAX. The polypeptide is Max-interacting protein 1 (MXI1) (Homo sapiens (Human)).